Consider the following 304-residue polypeptide: C-type lectin domain family 10 member A (304 aa).

The Cytoplasmic portion of the chain corresponds to 1-35 (MIYENLQNSRIEEKTQEPGKAPSQSFLWRILSWTH). The helical; Signal-anchor for type II membrane protein transmembrane segment at 36 to 56 (LLLFSLGLSLLLLVVVSVIGS) threads the bilayer. Over 57 to 304 (QNSQLRRDLG…ICEMKLAKES (248 aa)) the chain is Extracellular. N-linked (GlcNAc...) asparagine glycosylation is found at asparagine 74 and asparagine 166. A C-type lectin domain is found at 172–298 (CCPLHWTEHE…QRTFRWICEM (127 aa)). Disulfide bonds link cysteine 173/cysteine 184, cysteine 201/cysteine 296, and cysteine 274/cysteine 288.

In terms of assembly, homooligomer. Interacts with SIGLEC1, which may act as a counter-receptor for CLEC10A in lymph node. Detected in lymph node in the subcapsular sinus, interfollicular regions, T and B-cell boundary and in the areas surrounding high endothelial venules (at protein level). Expressed on the surface of activated macrophages. Expressed in heart, lung, testis, skeletal muscle, spleen, brain, kidney and thymus. Expressed in P388, RAW 264.7 and M1 cell lines.

Its subcellular location is the membrane. Recognizes terminal galactose and N-acetylgalactosamine units. May participate in the interaction between tumoricidal macrophages and tumor cells. Plays a role in the recruitment of inflammatory monocytes to adipose tissue in diet-induced obesity. This chain is C-type lectin domain family 10 member A (Clec10a), found in Mus musculus (Mouse).